The chain runs to 118 residues: NADH dehydrogenase [ubiquinone] iron-sulfur protein 5-A (118 aa).

The 42-residue stretch at Lys46–Gln87 folds into the CHCH domain. 2 consecutive short sequence motifs (cx9C motif) follow at residues Cys49–Cys59 and Cys69–Cys79. Disulfide bonds link Cys49-Cys79 and Cys59-Cys69. Residues Arg98 to His118 form a disordered region.

This sequence belongs to the complex I NDUFS5 subunit family. As to quaternary structure, complex I is composed of at least 49 different subunits. This is a component of the iron-sulfur (IP) fragment of the enzyme.

It is found in the mitochondrion. It localises to the mitochondrion inner membrane. The protein resides in the mitochondrion intermembrane space. In terms of biological role, accessory subunit of the mitochondrial membrane respiratory chain NADH dehydrogenase (Complex I), that is believed not to be involved in catalysis. Complex I functions in the transfer of electrons from NADH to the respiratory chain. The immediate electron acceptor for the enzyme is believed to be ubiquinone. This is NADH dehydrogenase [ubiquinone] iron-sulfur protein 5-A from Arabidopsis thaliana (Mouse-ear cress).